A 256-amino-acid chain; its full sequence is Nuclear shuttle protein (256 aa).

The short motif at 18-39 (NITNRYPIKRKYVAGHTRPCVR) is the Bipartite nuclear localization signal element. The short motif at 81 to 96 (SRGPSGDGRSRDYIKL) is the Nuclear localization signal element. The interval 150-187 (ELFGPYSACYVNLRLLNNQQHRYRVLHSVKRFVSSSGD) is interaction with Arabidopsis thaliana NSI protein.

It belongs to the begomovirus nuclear shuttle protein family. Binds to single-stranded and double-stranded viral DNA. Interacts with the host nuclear shuttle interacting (NSI) protein. This interaction may allow NSP to recruit NSI monomers to the viral genome and thus regulate nuclear export of viral genome by NSP.

The protein resides in the host nucleus. The protein localises to the host cytoplasm. Its subcellular location is the host cell membrane. Binds to the genomic viral ssDNA, shuttles it into and out of the cell nucleus. Begomoviruses use 2 proteins to transport their DNA from cell to cell. The nuclear shuttle protein (NSP) shuttles it between nucleus and cytoplasm and the movement protein (MP) probably transports the DNA-NSP complex to the cell periphery and facilitates movement across the cell wall. The sequence is that of Nuclear shuttle protein from Hewittia sublobata (Coralbush).